The chain runs to 983 residues: Probable beta-galactosidase C (983 aa).

Positions 1 to 23 (MRIFSFLFLLLLGILTGQGLVSG) are cleaved as a signal peptide. Substrate-binding residues include Tyr82, Asn127, Ala128, Glu129, and Asn187. The Proton donor role is filled by Glu188. Residue Asn197 is glycosylated (N-linked (GlcNAc...) asparagine). Tyr251 provides a ligand contact to substrate. The cysteines at positions 257 and 304 are disulfide-linked. N-linked (GlcNAc...) asparagine glycosylation occurs at Asn276. Glu287 (nucleophile) is an active-site residue. A substrate-binding site is contributed by Tyr353. Asn391, Asn434, Asn466, Asn516, Asn601, Asn676, Asn714, Asn719, and Asn804 each carry an N-linked (GlcNAc...) asparagine glycan.

The protein belongs to the glycosyl hydrolase 35 family.

The protein resides in the secreted. The enzyme catalyses Hydrolysis of terminal non-reducing beta-D-galactose residues in beta-D-galactosides.. Its function is as follows. Cleaves beta-linked terminal galactosyl residues from gangliosides, glycoproteins, and glycosaminoglycans. The polypeptide is Probable beta-galactosidase C (lacC) (Neosartorya fischeri (strain ATCC 1020 / DSM 3700 / CBS 544.65 / FGSC A1164 / JCM 1740 / NRRL 181 / WB 181) (Aspergillus fischerianus)).